We begin with the raw amino-acid sequence, 421 residues long: Expansin-like protein DDB_G0293186 (421 aa).

The signal sequence occupies residues 1 to 20 (MRTLKLIILLILSTFKTINS). Residue Asn19 is glycosylated (N-linked (GlcNAc...) asparagine). The 97-residue stretch at 43–139 (GGQCGLPLPG…QKVSCGFSGY (97 aa)) folds into the Expansin-like EG45 domain. 2 disulfide bridges follow: Cys46-Cys70 and Cys73-Cys134. Asn117 and Asn391 each carry an N-linked (GlcNAc...) asparagine glycan.

Belongs to the expansin family. Expansin A subfamily.

Its subcellular location is the secreted. Its function is as follows. May serve to lubricate the movement of the cellulose microfibrils during cell growth and wall extension and/or may serve to maintain the fluid state of the slug cell wall. In Dictyostelium discoideum (Social amoeba), this protein is Expansin-like protein DDB_G0293186.